The following is a 323-amino-acid chain: Sphingolipid delta(4)-desaturase DES1 (323 aa).

Helical transmembrane passes span 41-61 and 68-88; these read HNLI…FYLV and WLLF…TLAI. Positions 89 to 93 match the Histidine box-1 motif; that stretch reads HEISH. Residues 104–124 form a helical membrane-spanning segment; that stretch reads WNRCFGMFANLPLGLPYSVSF. The Histidine box-2 motif lies at 128–132; the sequence is HMDHH. 3 consecutive transmembrane segments (helical) span residues 152–172, 185–205, and 210–230; these read FFCT…FYTI, LEII…YTLG, and FYML…GHFI. A Histidine box-3 motif is present at residues 259 to 263; that stretch reads HNEHH.

This sequence belongs to the fatty acid desaturase type 1 family. DEGS subfamily. In terms of assembly, interacts with RLBP1; the interaction increases synthesis of chromophore-precursors by DEGS1.

It is found in the endoplasmic reticulum membrane. The catalysed reaction is an N-acylsphinganine + 2 Fe(II)-[cytochrome b5] + O2 + 2 H(+) = an N-acylsphing-4-enine + 2 Fe(III)-[cytochrome b5] + 2 H2O. The enzyme catalyses all-trans-retinol = 11-cis-retinol. It catalyses the reaction all-trans-retinol = 9-cis-retinol. It carries out the reaction all-trans-retinol = 13-cis-retinol. The catalysed reaction is 11-cis-retinol = 13-cis-retinol. The enzyme catalyses 11-cis-retinol = 9-cis-retinol. Functionally, has sphingolipid-delta-4-desaturase activity. Converts D-erythro-sphinganine to D-erythro-sphingosine (E-sphing-4-enine). Catalyzes the equilibrium isomerization of retinols. The sequence is that of Sphingolipid delta(4)-desaturase DES1 (degs1) from Xenopus tropicalis (Western clawed frog).